The following is a 68-amino-acid chain: Amphipathic peptide VmCT1 (68 aa).

A signal peptide spans 1 to 23 (MKTQFVILIVAVVLLQLISHSEA). Phe-36 is modified (phenylalanine amide). Positions 40-68 (GLRNFDDLDDTFEPEMSEADLKYLQDLLR) are excised as a propeptide.

This sequence belongs to the non-disulfide-bridged peptide (NDBP) superfamily. Short antimicrobial peptide (group 4) family. Expressed by the venom gland.

It is found in the secreted. It localises to the target cell membrane. Functionally, cationic amphipathic peptide with antibacterial activities against both Gram-positive and Gram-negative bacteria. Also shows antifungal activities. Is mildly hemolytic against human erythrocytes. In addition, when tested in vitro on the parasite Trypanosoma cruzi (responsible of the Chagas disease), is able to reduce the number of the three forms (epimastigote, trypomastigote and amastigote). Also shows antiplasmodial and cytotoxic activity (tested on Plasmodium gallinaceum, and MCF-7 breast cancer cell line). In Vaejovis mexicanus smithi (Mexican scorpion), this protein is Amphipathic peptide VmCT1.